The following is a 223-amino-acid chain: Deoxyribose-phosphate aldolase (223 aa).

The active-site Proton donor/acceptor is the D89. The Schiff-base intermediate with acetaldehyde role is filled by K152. The active-site Proton donor/acceptor is the K181.

This sequence belongs to the DeoC/FbaB aldolase family. DeoC type 1 subfamily.

The protein localises to the cytoplasm. It carries out the reaction 2-deoxy-D-ribose 5-phosphate = D-glyceraldehyde 3-phosphate + acetaldehyde. It functions in the pathway carbohydrate degradation; 2-deoxy-D-ribose 1-phosphate degradation; D-glyceraldehyde 3-phosphate and acetaldehyde from 2-deoxy-alpha-D-ribose 1-phosphate: step 2/2. Its function is as follows. Catalyzes a reversible aldol reaction between acetaldehyde and D-glyceraldehyde 3-phosphate to generate 2-deoxy-D-ribose 5-phosphate. In Bacillus mycoides (strain KBAB4) (Bacillus weihenstephanensis), this protein is Deoxyribose-phosphate aldolase.